The chain runs to 43 residues: Protein PsbN (43 aa).

The helical transmembrane segment at Thr5–Phe27 threads the bilayer.

It belongs to the PsbN family.

It is found in the plastid. It localises to the chloroplast thylakoid membrane. May play a role in photosystem I and II biogenesis. The protein is Protein PsbN of Lactoris fernandeziana.